Consider the following 207-residue polypeptide: Small ribosomal subunit protein uS4 (207 aa).

The interval T20–D45 is disordered. The S4 RNA-binding domain maps to M93–G158.

The protein belongs to the universal ribosomal protein uS4 family. Part of the 30S ribosomal subunit. Contacts protein S5. The interaction surface between S4 and S5 is involved in control of translational fidelity.

Its function is as follows. One of the primary rRNA binding proteins, it binds directly to 16S rRNA where it nucleates assembly of the body of the 30S subunit. Functionally, with S5 and S12 plays an important role in translational accuracy. This Leifsonia xyli subsp. xyli (strain CTCB07) protein is Small ribosomal subunit protein uS4.